We begin with the raw amino-acid sequence, 72 residues long: Translation initiation factor IF-1 1 (72 aa).

One can recognise an S1-like domain in the interval 1–72 (MSKDDVIQMA…TRARIIFRAK (72 aa)).

It belongs to the IF-1 family. Component of the 30S ribosomal translation pre-initiation complex which assembles on the 30S ribosome in the order IF-2 and IF-3, IF-1 and N-formylmethionyl-tRNA(fMet); mRNA recruitment can occur at any time during PIC assembly.

The protein localises to the cytoplasm. Its function is as follows. One of the essential components for the initiation of protein synthesis. Stabilizes the binding of IF-2 and IF-3 on the 30S subunit to which N-formylmethionyl-tRNA(fMet) subsequently binds. Helps modulate mRNA selection, yielding the 30S pre-initiation complex (PIC). Upon addition of the 50S ribosomal subunit IF-1, IF-2 and IF-3 are released leaving the mature 70S translation initiation complex. This Polynucleobacter asymbioticus (strain DSM 18221 / CIP 109841 / QLW-P1DMWA-1) (Polynucleobacter necessarius subsp. asymbioticus) protein is Translation initiation factor IF-1 1.